Reading from the N-terminus, the 298-residue chain is MSAQNPLFSGSIVALVTPMNHYGEVDFSCLEKLVEHHIEAGSNALVSVGTTGESATLSIEENVKVIEKTVEFAKGRIPIIAGAGANATSEAITMTKLLRDSGVAGCLSVVPYYNKPTQEGMYQHFKAIAECTDLPQILYNVPSRTGSDMKPETVARLAEIENIVGIKEATGDVSRIVKIKQLAGKNFIVLSGNDTTGLEAIKLGAEGVISVTNNIAAKDMADMCRYALAGDFDKAEEINARLMRLHHDLFIESNPIPVKWAAYRLGLIKSPHLRLPLTTLSEEIQPKVEDALKIAGLL.

Thr51 provides a ligand contact to pyruvate. Tyr139 (proton donor/acceptor) is an active-site residue. Lys167 (schiff-base intermediate with substrate) is an active-site residue. Ile209 lines the pyruvate pocket.

Belongs to the DapA family. As to quaternary structure, homotetramer; dimer of dimers.

Its subcellular location is the cytoplasm. The enzyme catalyses L-aspartate 4-semialdehyde + pyruvate = (2S,4S)-4-hydroxy-2,3,4,5-tetrahydrodipicolinate + H2O + H(+). The protein operates within amino-acid biosynthesis; L-lysine biosynthesis via DAP pathway; (S)-tetrahydrodipicolinate from L-aspartate: step 3/4. Catalyzes the condensation of (S)-aspartate-beta-semialdehyde [(S)-ASA] and pyruvate to 4-hydroxy-tetrahydrodipicolinate (HTPA). In Haemophilus influenzae (strain 86-028NP), this protein is 4-hydroxy-tetrahydrodipicolinate synthase.